Consider the following 317-residue polypeptide: Malate dehydrogenase (317 aa).

Residues 10–15 and Asp-34 contribute to the NAD(+) site; that span reads GGGQIG. Arg-83 and Arg-89 together coordinate substrate. NAD(+) is bound by residues Asn-96 and 119–121; that span reads ISN. Residues Asn-121 and Arg-152 each contribute to the substrate site. The active-site Proton acceptor is the His-176.

It belongs to the LDH/MDH superfamily. MDH type 3 family.

It catalyses the reaction (S)-malate + NAD(+) = oxaloacetate + NADH + H(+). Functionally, catalyzes the reversible oxidation of malate to oxaloacetate. This is Malate dehydrogenase from Citrifermentans bemidjiense (strain ATCC BAA-1014 / DSM 16622 / JCM 12645 / Bem) (Geobacter bemidjiensis).